The chain runs to 183 residues: Large ribosomal subunit protein uL6 (183 aa).

The protein belongs to the universal ribosomal protein uL6 family. As to quaternary structure, part of the 50S ribosomal subunit.

In terms of biological role, this protein binds to the 23S rRNA, and is important in its secondary structure. It is located near the subunit interface in the base of the L7/L12 stalk, and near the tRNA binding site of the peptidyltransferase center. The protein is Large ribosomal subunit protein uL6 of Chlamydia muridarum (strain MoPn / Nigg).